A 72-amino-acid polypeptide reads, in one-letter code: Translation initiation factor IF-1 (72 aa).

Residues M1–K72 form the S1-like domain.

Belongs to the IF-1 family. Component of the 30S ribosomal translation pre-initiation complex which assembles on the 30S ribosome in the order IF-2 and IF-3, IF-1 and N-formylmethionyl-tRNA(fMet); mRNA recruitment can occur at any time during PIC assembly.

It is found in the cytoplasm. Functionally, one of the essential components for the initiation of protein synthesis. Stabilizes the binding of IF-2 and IF-3 on the 30S subunit to which N-formylmethionyl-tRNA(fMet) subsequently binds. Helps modulate mRNA selection, yielding the 30S pre-initiation complex (PIC). Upon addition of the 50S ribosomal subunit IF-1, IF-2 and IF-3 are released leaving the mature 70S translation initiation complex. This Geotalea uraniireducens (strain Rf4) (Geobacter uraniireducens) protein is Translation initiation factor IF-1.